The chain runs to 237 residues: Leucyl/phenylalanyl-tRNA--protein transferase (237 aa).

This sequence belongs to the L/F-transferase family.

The protein localises to the cytoplasm. It carries out the reaction N-terminal L-lysyl-[protein] + L-leucyl-tRNA(Leu) = N-terminal L-leucyl-L-lysyl-[protein] + tRNA(Leu) + H(+). The enzyme catalyses N-terminal L-arginyl-[protein] + L-leucyl-tRNA(Leu) = N-terminal L-leucyl-L-arginyl-[protein] + tRNA(Leu) + H(+). It catalyses the reaction L-phenylalanyl-tRNA(Phe) + an N-terminal L-alpha-aminoacyl-[protein] = an N-terminal L-phenylalanyl-L-alpha-aminoacyl-[protein] + tRNA(Phe). Functionally, functions in the N-end rule pathway of protein degradation where it conjugates Leu, Phe and, less efficiently, Met from aminoacyl-tRNAs to the N-termini of proteins containing an N-terminal arginine or lysine. The sequence is that of Leucyl/phenylalanyl-tRNA--protein transferase from Photobacterium profundum (strain SS9).